Reading from the N-terminus, the 744-residue chain is Tripartite motif-containing protein 2 (744 aa).

A Phosphoserine modification is found at Ser10. Residues 23-64 form an RING-type zinc finger; the sequence is CSICLERYKNPKVLPCLHTFCERCLQNYIPAHSLTLSCPVCR. A B box-type zinc finger spans residues 113–154; it reads GKPLSCPNHDGNVMDFYCQSCETAMCRECTEGEHAEHPTVPL. Zn(2+)-binding residues include Cys118, His121, Cys141, and His146. Residues 320-421 form a Filamin repeat; sequence TTNAVASETV…IRGSPFKLKV (102 aa). Phosphothreonine is present on Thr371. Phosphoserine is present on residues Ser375, Ser424, and Ser428. The interval 432–462 is disordered; sequence EGVKRRVKSPGSGHVKQKAVKRPASMYSTGK. NHL repeat units lie at residues 473-516, 520-563, 564-605, 609-652, 656-699, and 700-743; these read IFRV…FSND, KSRF…FSSD, GKFK…FQPN, VTRF…FNQE, MLKF…FDGS, and GSFL…YRYL.

It belongs to the TRIM/RBCC family. In terms of assembly, forms homooligomers. Interacts with TRIM3; this interaction reduces TRIM2 activity. Interacts with myosin V; myosin V may not be a substrate for ubiquitination. Interacts with NEFL. Interacts with phosphorylated BCL2L11. Interacts with SIRPA. RING-type zinc finger-dependent and UBE2D1-dependent autoubiquitination.

It localises to the cytoplasm. The enzyme catalyses S-ubiquitinyl-[E2 ubiquitin-conjugating enzyme]-L-cysteine + [acceptor protein]-L-lysine = [E2 ubiquitin-conjugating enzyme]-L-cysteine + N(6)-ubiquitinyl-[acceptor protein]-L-lysine.. It functions in the pathway protein modification; protein ubiquitination. Its function is as follows. UBE2D1-dependent E3 ubiquitin-protein ligase that mediates the ubiquitination of NEFL and of phosphorylated BCL2L11. Plays a neuroprotective function. May play a role in neuronal rapid ischemic tolerance. Plays a role in antiviral immunity and limits New World arenavirus infection independently of its ubiquitin ligase activity. The polypeptide is Tripartite motif-containing protein 2 (TRIM2) (Ailuropoda melanoleuca (Giant panda)).